Consider the following 140-residue polypeptide: ATP synthase epsilon chain (140 aa).

Belongs to the ATPase epsilon chain family. F-type ATPases have 2 components, CF(1) - the catalytic core - and CF(0) - the membrane proton channel. CF(1) has five subunits: alpha(3), beta(3), gamma(1), delta(1), epsilon(1). CF(0) has three main subunits: a, b and c.

It is found in the cell inner membrane. Produces ATP from ADP in the presence of a proton gradient across the membrane. This Bordetella bronchiseptica (strain ATCC BAA-588 / NCTC 13252 / RB50) (Alcaligenes bronchisepticus) protein is ATP synthase epsilon chain.